The chain runs to 705 residues: Methionine--tRNA ligase (705 aa).

The short motif at 17-27 (PYANGPVHLGH) is the 'HIGH' region element. Zn(2+)-binding residues include cysteine 149, cysteine 152, cysteine 162, and cysteine 165. Positions 347 to 351 (KFSKS) match the 'KMSKS' region motif. Lysine 350 provides a ligand contact to ATP. Residues 604 to 705 (EFQKVDLRVA…GEGINGQSVQ (102 aa)) form the tRNA-binding domain.

Belongs to the class-I aminoacyl-tRNA synthetase family. MetG type 1 subfamily. In terms of assembly, homodimer. Zn(2+) is required as a cofactor.

The protein resides in the cytoplasm. The enzyme catalyses tRNA(Met) + L-methionine + ATP = L-methionyl-tRNA(Met) + AMP + diphosphate. Is required not only for elongation of protein synthesis but also for the initiation of all mRNA translation through initiator tRNA(fMet) aminoacylation. In Chlorobium chlorochromatii (strain CaD3), this protein is Methionine--tRNA ligase.